A 206-amino-acid chain; its full sequence is Ribosomal RNA small subunit methyltransferase G (206 aa).

S-adenosyl-L-methionine-binding positions include Gly-73, Leu-78, 124 to 125 (VE), and Arg-139.

It belongs to the methyltransferase superfamily. RNA methyltransferase RsmG family.

The protein localises to the cytoplasm. It carries out the reaction guanosine(527) in 16S rRNA + S-adenosyl-L-methionine = N(7)-methylguanosine(527) in 16S rRNA + S-adenosyl-L-homocysteine. Specifically methylates the N7 position of guanine in position 527 of 16S rRNA. This Idiomarina loihiensis (strain ATCC BAA-735 / DSM 15497 / L2-TR) protein is Ribosomal RNA small subunit methyltransferase G.